A 542-amino-acid polypeptide reads, in one-letter code: Hydroxylamine reductase (542 aa).

[4Fe-4S] cluster is bound by residues cysteine 5, cysteine 8, cysteine 17, and cysteine 23. 8 residues coordinate hybrid [4Fe-2O-2S] cluster: histidine 237, glutamate 261, cysteine 305, cysteine 397, cysteine 425, cysteine 450, glutamate 485, and lysine 487. A Cysteine persulfide modification is found at cysteine 397.

This sequence belongs to the HCP family. [4Fe-4S] cluster is required as a cofactor. Requires hybrid [4Fe-2O-2S] cluster as cofactor.

The protein resides in the cytoplasm. It catalyses the reaction A + NH4(+) + H2O = hydroxylamine + AH2 + H(+). Functionally, catalyzes the reduction of hydroxylamine to form NH(3) and H(2)O. The polypeptide is Hydroxylamine reductase (Acetivibrio thermocellus (strain ATCC 27405 / DSM 1237 / JCM 9322 / NBRC 103400 / NCIMB 10682 / NRRL B-4536 / VPI 7372) (Clostridium thermocellum)).